The sequence spans 475 residues: UDP-N-acetylmuramate--L-alanine ligase (475 aa).

125–131 (GTHGKTT) is an ATP binding site.

This sequence belongs to the MurCDEF family.

Its subcellular location is the cytoplasm. It catalyses the reaction UDP-N-acetyl-alpha-D-muramate + L-alanine + ATP = UDP-N-acetyl-alpha-D-muramoyl-L-alanine + ADP + phosphate + H(+). Its pathway is cell wall biogenesis; peptidoglycan biosynthesis. Functionally, cell wall formation. This is UDP-N-acetylmuramate--L-alanine ligase from Glaesserella parasuis serovar 5 (strain SH0165) (Haemophilus parasuis).